The sequence spans 2131 residues: Protein Ycf2 (2131 aa).

1484 to 1491 (GSIGTGRS) is a binding site for ATP.

This sequence belongs to the Ycf2 family.

It localises to the plastid. Its subcellular location is the chloroplast stroma. Its function is as follows. Probable ATPase of unknown function. Its presence in a non-photosynthetic plant (Epifagus virginiana) and experiments in tobacco indicate that it has an essential function which is probably not related to photosynthesis. In Spinacia oleracea (Spinach), this protein is Protein Ycf2 (ycf2-A).